The chain runs to 299 residues: N-acetylaspartate synthetase (299 aa).

Residues 44–57 (AAPGPAAAPPPAAG) show a composition bias toward pro residues. A disordered region spans residues 44-70 (AAPGPAAAPPPAAGPQPHGGTGGAGPP). Over residues 60–70 (PHGGTGGAGPP) the composition is skewed to gly residues. The chain crosses the membrane as a helical span at residues 118 to 138 (YALLAALCFAVTRSLLLTCLV). Residues 143-280 (LALRYYYSRK…VLPGMTLSLA (138 aa)) form the N-acetyltransferase domain.

The protein belongs to the NAT8 family. Expressed in brain, including in mesencephalic dopaminergic neurons of the substantia nigra and ventral tegmental area and oligodendrocytes. Expressed in cortical pyramidal neurons and granule cells of the hippocampus (at protein level).

Its subcellular location is the cytoplasm. It is found in the microsome membrane. It localises to the mitochondrion membrane. The protein localises to the endoplasmic reticulum membrane. It catalyses the reaction L-aspartate + acetyl-CoA = N-acetyl-L-aspartate + CoA + H(+). With respect to regulation, aminooxyacetic acid (AOAA) blocks its activity in both cytoplasm and mitochondria. In terms of biological role, catalyzes the synthesis of N-acetylaspartate acid (NAA) from L-aspartate and acetyl-CoA. Promotes dopamine uptake by regulating TNF-alpha expression. Attenuates methamphetamine-induced inhibition of dopamine uptake. The chain is N-acetylaspartate synthetase (Nat8l) from Rattus norvegicus (Rat).